Here is a 177-residue protein sequence, read N- to C-terminus: Large ribosomal subunit protein uL10 (177 aa).

The protein belongs to the universal ribosomal protein uL10 family. As to quaternary structure, part of the ribosomal stalk of the 50S ribosomal subunit. The N-terminus interacts with L11 and the large rRNA to form the base of the stalk. The C-terminus forms an elongated spine to which L12 dimers bind in a sequential fashion forming a multimeric L10(L12)X complex.

Its function is as follows. Forms part of the ribosomal stalk, playing a central role in the interaction of the ribosome with GTP-bound translation factors. This chain is Large ribosomal subunit protein uL10, found in Leptospira interrogans serogroup Icterohaemorrhagiae serovar copenhageni (strain Fiocruz L1-130).